Consider the following 539-residue polypeptide: Zinc finger and BTB domain-containing protein 7B (539 aa).

The BTB domain maps to 34–115 (CDLTIRTQGL…AYTATLTTSS (82 aa)). S150 is subject to Phosphoserine. The interval 171 to 308 (ASGVPNGEDS…SPEELGSDED (138 aa)) is disordered. Over residues 182 to 196 (PQVPLPPPPPPPPRP) the composition is skewed to pro residues. The segment covering 197–206 (VARRSRKPRK) has biased composition (basic residues). Residues K206 and K212 each carry the N6-acetyllysine; by EP300; alternate modification. Glycyl lysine isopeptide (Lys-Gly) (interchain with G-Cter in ubiquitin); alternate cross-links involve residues K206 and K212. Over residues 273–282 (YEGEEEEEEL) the composition is skewed to acidic residues. K335 is subject to N6-acetyllysine; by EP300; alternate. A Glycyl lysine isopeptide (Lys-Gly) (interchain with G-Cter in ubiquitin); alternate cross-link involves residue K335. The required for interaction with and acetylation by EP300 stretch occupies residues 344–400 (MPQECPVCHKIIHGAGKLPRHMRTHTGEKPFACEVCGVRFTRNDKLKIHMRKHTGER). The segment at 346 to 368 (QECPVCHKIIHGAGKLPRHMRTH) adopts a C2H2-type 1 zinc-finger fold. Phosphothreonine is present on T369. C2H2-type zinc fingers lie at residues 374–396 (FACE…MRKH) and 402–424 (YSCP…MHLH). The C2H2-type 4; atypical zinc finger occupies 430–454 (YECHLCHKAFAKEDHLQRHLKGQNC). Disordered regions lie at residues 458–486 (RTRR…GLDL) and 501–539 (FWEQ…MESS). Residues 508–517 (TGPPVSTPGP) show a composition bias toward pro residues.

Homodimerizes. Interacts with NCL, NEDD4 and YBX1. Interacts with HNRNPU (via RNA-binding RGG-box region); the interaction facilitates the recruitment of long non-coding RNA Blnc1 by ZBTB7B. Interacts with HDAC4 and HDAC5; the interaction allows the recruitment of HDAC4 and HDAC5 on CD8 loci for deacetylation and possible inhibition of CD8 genes expression. Acetylated directly and specifically by EP300. EP300-mediated acetylation of Lys-206, Lys-212 and Lys-335 stabilizes the protein by antagonizing ubiquitin conjugation. In terms of processing, ubiquitinated, leading to proteasomal degradation. Competes with acetylation on Lys-206, Lys-212 and Lys-335.

Its subcellular location is the nucleus. Functionally, transcription regulator that acts as a key regulator of lineage commitment of immature T-cell precursors. Exerts distinct biological functions in the mammary epithelial cells and T cells in a tissue-specific manner. Necessary and sufficient for commitment of CD4 lineage, while its absence causes CD8 commitment. Development of immature T-cell precursors (thymocytes) to either the CD4 helper or CD8 killer T-cell lineages correlates precisely with their T-cell receptor specificity for major histocompatibility complex class II or class I molecules, respectively. Cross-antagonism between ZBTB7B and CBF complexes are determinative to CD4 versus CD8 cell fate decision. Suppresses RUNX3 expression and imposes CD4+ lineage fate by inducing the SOCS suppressors of cytokine signaling. induces, as a transcriptional activator, SOCS genes expression which represses RUNX3 expression and promotes the CD4+ lineage fate. During CD4 lineage commitment, associates with multiple sites at the CD8 locus, acting as a negative regulator of the CD8 promoter and enhancers by epigenetic silencing through the recruitment of class II histone deacetylases, such as HDAC4 and HDAC5, to these loci. Regulates the development of IL17-producing CD1d-restricted naural killer (NK) T cells. Also functions as an important metabolic regulator in the lactating mammary glands. Critical feed-forward regulator of insulin signaling in mammary gland lactation, directly regulates expression of insulin receptor substrate-1 (IRS-1) and insulin-induced Akt-mTOR-SREBP signaling. Transcriptional repressor of the collagen COL1A1 and COL1A2 genes. May also function as a repressor of fibronectin and possibly other extracellular matrix genes. Potent driver of brown fat development, thermogenesis and cold-induced beige fat formation. Recruits the brown fat lncRNA 1 (Blnc1):HNRNPU ribonucleoprotein complex to activate thermogenic gene expression in brown and beige adipocytes. The polypeptide is Zinc finger and BTB domain-containing protein 7B (Homo sapiens (Human)).